The sequence spans 185 residues: Threonylcarbamoyl-AMP synthase (185 aa).

In terms of domain architecture, YrdC-like spans 1 to 185 (MDNLQQVVSA…AFSDTVLRQG (185 aa)).

Belongs to the SUA5 family. TsaC subfamily.

It localises to the cytoplasm. The enzyme catalyses L-threonine + hydrogencarbonate + ATP = L-threonylcarbamoyladenylate + diphosphate + H2O. Its function is as follows. Required for the formation of a threonylcarbamoyl group on adenosine at position 37 (t(6)A37) in tRNAs that read codons beginning with adenine. Catalyzes the conversion of L-threonine, HCO(3)(-)/CO(2) and ATP to give threonylcarbamoyl-AMP (TC-AMP) as the acyladenylate intermediate, with the release of diphosphate. This is Threonylcarbamoyl-AMP synthase from Photobacterium profundum (strain SS9).